A 215-amino-acid polypeptide reads, in one-letter code: Protein NETWORKED 3B (215 aa).

The NAB domain maps to S5–S90. Residues D134 to L165 adopt a coiled-coil conformation.

It belongs to the NET family. In terms of assembly, interacts with F-actin.

Its function is as follows. Plant-specific actin binding protein. May be part of a membrane-cytoskeletal adapter complex. The polypeptide is Protein NETWORKED 3B (Arabidopsis thaliana (Mouse-ear cress)).